Consider the following 288-residue polypeptide: Quinate/shikimate dehydrogenase (288 aa).

The substrate site is built by Lys-71 and Asp-107. NAD(+) is bound by residues 132 to 135 (AGGA), 155 to 158 (NRRD), Lys-205, 232 to 235 (CVYN), and Gly-255.

It belongs to the shikimate dehydrogenase family. In terms of assembly, homodimer.

It catalyses the reaction L-quinate + NAD(+) = 3-dehydroquinate + NADH + H(+). It carries out the reaction L-quinate + NADP(+) = 3-dehydroquinate + NADPH + H(+). The catalysed reaction is shikimate + NADP(+) = 3-dehydroshikimate + NADPH + H(+). The enzyme catalyses shikimate + NAD(+) = 3-dehydroshikimate + NADH + H(+). It functions in the pathway metabolic intermediate biosynthesis; chorismate biosynthesis; chorismate from D-erythrose 4-phosphate and phosphoenolpyruvate: step 4/7. Its function is as follows. The actual biological function of YdiB remains unclear, nor is it known whether 3-dehydroshikimate or quinate represents the natural substrate. Catalyzes the reversible NAD-dependent reduction of both 3-dehydroshikimate (DHSA) and 3-dehydroquinate to yield shikimate (SA) and quinate, respectively. It can use both NAD or NADP for catalysis, however it has higher catalytic efficiency with NAD. This Escherichia coli (strain SMS-3-5 / SECEC) protein is Quinate/shikimate dehydrogenase.